The chain runs to 134 residues: Large ribosomal subunit protein uL24 (134 aa).

The protein belongs to the universal ribosomal protein uL24 family. In terms of assembly, part of the 50S ribosomal subunit.

One of two assembly initiator proteins, it binds directly to the 5'-end of the 23S rRNA, where it nucleates assembly of the 50S subunit. In terms of biological role, located at the polypeptide exit tunnel on the outside of the subunit. This Sulfolobus acidocaldarius (strain ATCC 33909 / DSM 639 / JCM 8929 / NBRC 15157 / NCIMB 11770) protein is Large ribosomal subunit protein uL24.